The following is a 245-amino-acid chain: TPR repeat-containing protein PA4299 (245 aa).

Residues methionine 1–glycine 16 form the signal peptide. Cysteine 17 carries the N-palmitoyl cysteine lipid modification. Cysteine 17 carries S-diacylglycerol cysteine lipidation. TPR repeat units follow at residues proline 100–glutamate 133, arginine 135–glycine 167, and leucine 169–aspartate 200. Residues serine 210 to proline 245 are disordered.

It localises to the cell membrane. The polypeptide is TPR repeat-containing protein PA4299 (Pseudomonas aeruginosa (strain ATCC 15692 / DSM 22644 / CIP 104116 / JCM 14847 / LMG 12228 / 1C / PRS 101 / PAO1)).